A 343-amino-acid polypeptide reads, in one-letter code: Anthranilate phosphoribosyltransferase (343 aa).

5-phospho-alpha-D-ribose 1-diphosphate contacts are provided by residues glycine 78, glycine 81–aspartate 82, threonine 86, asparagine 88–threonine 91, lysine 106–serine 114, and serine 118. Glycine 78 serves as a coordination point for anthranilate. Mg(2+) is bound at residue serine 90. Residue asparagine 109 coordinates anthranilate. Arginine 164 contacts anthranilate. Mg(2+) contacts are provided by aspartate 223 and glutamate 224.

It belongs to the anthranilate phosphoribosyltransferase family. Homodimer. Mg(2+) serves as cofactor.

It carries out the reaction N-(5-phospho-beta-D-ribosyl)anthranilate + diphosphate = 5-phospho-alpha-D-ribose 1-diphosphate + anthranilate. It functions in the pathway amino-acid biosynthesis; L-tryptophan biosynthesis; L-tryptophan from chorismate: step 2/5. Functionally, catalyzes the transfer of the phosphoribosyl group of 5-phosphorylribose-1-pyrophosphate (PRPP) to anthranilate to yield N-(5'-phosphoribosyl)-anthranilate (PRA). The sequence is that of Anthranilate phosphoribosyltransferase from Chlamydia felis (strain Fe/C-56) (Chlamydophila felis).